The chain runs to 122 residues: Large ribosomal subunit protein uL14 (122 aa).

Belongs to the universal ribosomal protein uL14 family. In terms of assembly, part of the 50S ribosomal subunit. Forms a cluster with proteins L3 and L19. In the 70S ribosome, L14 and L19 interact and together make contacts with the 16S rRNA in bridges B5 and B8.

Binds to 23S rRNA. Forms part of two intersubunit bridges in the 70S ribosome. This chain is Large ribosomal subunit protein uL14, found in Roseiflexus castenholzii (strain DSM 13941 / HLO8).